A 155-amino-acid polypeptide reads, in one-letter code: Endoribonuclease YbeY (155 aa).

Zn(2+) contacts are provided by histidine 114, histidine 118, and histidine 124.

It belongs to the endoribonuclease YbeY family. Zn(2+) is required as a cofactor.

It is found in the cytoplasm. In terms of biological role, single strand-specific metallo-endoribonuclease involved in late-stage 70S ribosome quality control and in maturation of the 3' terminus of the 16S rRNA. The chain is Endoribonuclease YbeY from Photorhabdus laumondii subsp. laumondii (strain DSM 15139 / CIP 105565 / TT01) (Photorhabdus luminescens subsp. laumondii).